Reading from the N-terminus, the 101-residue chain is Apolipoprotein C-II (101 aa).

Residues 1-22 (MGTRFLLALCLVLLVLGFEVQG) form the signal peptide. A propeptide spans 23–28 (AQLPQQ) (removed in mature form). Positions 66-74 (AVDEKLRDL) are lipid binding. A lipoprotein lipase cofactor region spans residues 78–101 (STAAMSTYTGIFTDQVLSVLKGEE).

It belongs to the apolipoprotein C2 family. Proapolipoprotein C-II is synthesized as a sialic acid containing glycoprotein which is subsequently desialylated prior to its proteolytic processing. Post-translationally, proapolipoprotein C-II, the major form found in plasma undergoes proteolytic cleavage of its N-terminal hexapeptide to generate apolipoprotein C-II, which occurs as the minor form in plasma.

It localises to the secreted. Its function is as follows. Component of chylomicrons, very low-density lipoproteins (VLDL), low-density lipoproteins (LDL), and high-density lipoproteins (HDL) in plasma. Plays an important role in lipoprotein metabolism as an activator of lipoprotein lipase. Both proapolipoprotein C-II and apolipoprotein C-II can activate lipoprotein lipase. The sequence is that of Apolipoprotein C-II (APOC2) from Papio anubis (Olive baboon).